A 694-amino-acid polypeptide reads, in one-letter code: GRB2-associated-binding protein 1 (694 aa).

Ser-2 is modified (N-acetylserine). The PH domain maps to Glu-5–Gly-116. 2 disordered regions span residues Glu-122–Leu-164 and Pro-194–Gly-231. Residues Ala-145–Thr-157 show a composition bias toward polar residues. The span at Pro-194–Ser-203 shows a compositional bias: basic and acidic residues. Residues Ala-204 to Gly-231 are compositionally biased toward polar residues. Phosphoserine occurs at positions 251, 253, 266, and 304. The interval Phe-323–Asn-386 is disordered. Residues Ile-362–Asn-386 are compositionally biased toward polar residues. Position 387 is a phosphothreonine (Thr-387). Residues Ser-402 and Ser-454 each carry the phosphoserine modification. 2 disordered regions span residues Ala-493 to Ala-532 and Glu-544 to Arg-656. Ala-547 carries the post-translational modification Phosphoserine. The segment covering Pro-594–Gly-611 has biased composition (polar residues). Tyr-627 carries the phosphotyrosine modification. Residue Thr-638 is modified to Phosphothreonine. At Ser-651 the chain carries Phosphoserine. Tyr-659 is modified (phosphotyrosine). The segment at Lys-671–Lys-694 is disordered. The span at Ser-672–Thr-684 shows a compositional bias: basic and acidic residues. A Phosphoserine modification is found at Ser-683. Positions Glu-685–Lys-694 are enriched in polar residues.

The protein belongs to the GAB family. Identified in a complex containing FRS2, GRB2, GAB1, PIK3R1 and SOS1. Forms a tripartite complex containing GAB1, METTL13 and SPRY2. Within the complex interacts with METTL13. Interacts with GRB2 and with other SH2-containing proteins. Interacts with phosphorylated LAT2. Interacts with PTPRJ. Interacts (phosphorylated) with PTPN11. Interacts with HCK. Post-translationally, phosphorylated in response to FGFR1 activation. Phosphorylated on tyrosine residue(s) by the epidermal growth factor receptor (EGFR) and the insulin receptor (INSR). Tyrosine phosphorylation of GAB1 mediates interaction with several proteins that contain SH2 domains. Phosphorylated on tyrosine residues by HCK upon IL6 signaling.

Its function is as follows. Adapter protein that plays a role in intracellular signaling cascades triggered by activated receptor-type kinases. Plays a role in FGFR1 signaling. Probably involved in signaling by the epidermal growth factor receptor (EGFR) and the insulin receptor (INSR). Involved in the MET/HGF-signaling pathway. The chain is GRB2-associated-binding protein 1 (GAB1) from Homo sapiens (Human).